The following is a 102-amino-acid chain: A-type ATP synthase subunit F (102 aa).

Belongs to the V-ATPase F subunit family. As to quaternary structure, has multiple subunits with at least A(3), B(3), C, D, E, F, H, I and proteolipid K(x).

It is found in the cell membrane. Functionally, component of the A-type ATP synthase that produces ATP from ADP in the presence of a proton gradient across the membrane. This chain is A-type ATP synthase subunit F, found in Thermococcus kodakarensis (strain ATCC BAA-918 / JCM 12380 / KOD1) (Pyrococcus kodakaraensis (strain KOD1)).